A 202-amino-acid polypeptide reads, in one-letter code: Imidazoleglycerol-phosphate dehydratase (202 aa).

Belongs to the imidazoleglycerol-phosphate dehydratase family.

It localises to the cytoplasm. It carries out the reaction D-erythro-1-(imidazol-4-yl)glycerol 3-phosphate = 3-(imidazol-4-yl)-2-oxopropyl phosphate + H2O. Its pathway is amino-acid biosynthesis; L-histidine biosynthesis; L-histidine from 5-phospho-alpha-D-ribose 1-diphosphate: step 6/9. In Corynebacterium glutamicum (strain ATCC 13032 / DSM 20300 / JCM 1318 / BCRC 11384 / CCUG 27702 / LMG 3730 / NBRC 12168 / NCIMB 10025 / NRRL B-2784 / 534), this protein is Imidazoleglycerol-phosphate dehydratase.